A 137-amino-acid chain; its full sequence is Large ribosomal subunit protein uL13 (137 aa).

This sequence belongs to the universal ribosomal protein uL13 family. Part of the 50S ribosomal subunit.

This protein is one of the early assembly proteins of the 50S ribosomal subunit, although it is not seen to bind rRNA by itself. It is important during the early stages of 50S assembly. The polypeptide is Large ribosomal subunit protein uL13 (Methanocaldococcus jannaschii (strain ATCC 43067 / DSM 2661 / JAL-1 / JCM 10045 / NBRC 100440) (Methanococcus jannaschii)).